The sequence spans 518 residues: Cell wall biosynthesis protein LcpA (518 aa).

Over 1 to 31 (MTEKYRPVRDIKPAPAAMQSTKQAGHPVFRS) the chain is Cytoplasmic. The helical transmembrane segment at 32-52 (VVAFVSVLVLLVSGLGYLAVG) threads the bilayer. Residues 53–518 (KVDGVASGNL…AGGDGPRCVN (466 aa)) are Periplasmic-facing. The segment at 485–518 (AVTSSTVGQPGADVGEPIESPEFDAGGDGPRCVN) is disordered.

This sequence belongs to the LytR/CpsA/Psr (LCP) family. In terms of assembly, forms homodimers and homotetramers.

It localises to the cell inner membrane. Involved in cell wall biosynthesis. May be responsible for the transfer of arabinogalactan onto peptidoglycan. In vitro, has pyrophosphatase activity. This chain is Cell wall biosynthesis protein LcpA, found in Corynebacterium glutamicum (strain ATCC 13032 / DSM 20300 / JCM 1318 / BCRC 11384 / CCUG 27702 / LMG 3730 / NBRC 12168 / NCIMB 10025 / NRRL B-2784 / 534).